A 483-amino-acid polypeptide reads, in one-letter code: Keratin, type II cytoskeletal 8 (483 aa).

Over residues 1–25 (MSVRVTQKSYKMSTSGPRAFSSRSF) the composition is skewed to polar residues. Residues 1–43 (MSVRVTQKSYKMSTSGPRAFSSRSFTSGPGARISSSSFSRVGS) form a disordered region. A head region spans residues 1–90 (MSVRVTQKSY…DPNIQAVRTQ (90 aa)). Phosphoserine; by PKC/PRKCE is present on serine 9. Lysine 11 is covalently cross-linked (Glycyl lysine isopeptide (Lys-Gly) (interchain with G-Cter in SUMO2)). Residues serine 13, serine 15, serine 21, and serine 22 each carry the phosphoserine modification. Arginine 23 carries the omega-N-methylarginine modification. Serine 24 bears the Phosphoserine; by PKC/PRKCE mark. Serine 24 is modified (phosphoserine). A Phosphothreonine modification is found at threonine 26. Residues 26 to 43 (TSGPGARISSSSFSRVGS) show a composition bias toward low complexity. A Phosphoserine modification is found at serine 27. An Omega-N-methylarginine modification is found at arginine 32. 3 positions are modified to phosphoserine: serine 34, serine 37, and serine 39. Residue arginine 40 is modified to Omega-N-methylarginine. Residues serine 43, serine 44, and serine 47 each carry the phosphoserine modification. The residue at position 49 (arginine 49) is an Asymmetric dimethylarginine; alternate. Arginine 49 carries the omega-N-methylarginine; alternate modification. Serine 51 carries the post-translational modification Phosphoserine. Residues 91–126 (EKEQIKTLNNKFASFIDKVRFLEQQNKMLETKWSLL) form a coil 1A region. One can recognise an IF rod domain in the interval 91 to 402 (EKEQIKTLNN…KLLEGEESRL (312 aa)). An N6-malonyllysine modification is found at lysine 101. Residues lysine 122 and lysine 130 each participate in a glycyl lysine isopeptide (Lys-Gly) (interchain with G-Cter in SUMO2) cross-link. A linker 1 region spans residues 127–143 (QQQKTSRSNMDNMFESY). Positions 144–235 (INNLRRQLEA…QIHEEEIREL (92 aa)) are coil 1B. Residue lysine 197 forms a Glycyl lysine isopeptide (Lys-Gly) (interchain with G-Cter in SUMO1); alternate linkage. A Glycyl lysine isopeptide (Lys-Gly) (interchain with G-Cter in SUMO2); alternate cross-link involves residue lysine 197. Lysine 207 is modified (N6-acetyllysine). The tract at residues 236–259 (QSQISDTSVVLSMDNSRSLDMDSI) is linker 12. Phosphoserine is present on residues serine 253, serine 258, and serine 274. The interval 260 to 398 (IAEVRAQYEE…ATYRKLLEGE (139 aa)) is coil 2. Positions 261 to 382 (AEVRAQYEEI…EYQELMNVKL (122 aa)) are necessary for interaction with PNN. A Glycyl lysine isopeptide (Lys-Gly) (interchain with G-Cter in SUMO2) cross-link involves residue lysine 285. Lysine 295 participates in a covalent cross-link: Glycyl lysine isopeptide (Lys-Gly) (interchain with G-Cter in SUMO2); alternate. N6-acetyllysine; alternate is present on lysine 295. Lysine 304 participates in a covalent cross-link: Glycyl lysine isopeptide (Lys-Gly) (interchain with G-Cter in SUMO2). Lysine 325 is covalently cross-linked (Glycyl lysine isopeptide (Lys-Gly) (interchain with G-Cter in SUMO2); alternate). Position 325 is an N6-acetyllysine; alternate (lysine 325). Residue lysine 393 forms a Glycyl lysine isopeptide (Lys-Gly) (interchain with G-Cter in SUMO2) linkage. The interval 399–483 (ESRLESGMQN…VSESSDIMSK (85 aa)) is tail. Phosphoserine occurs at positions 400, 404, 410, 417, 424, 426, and 432. Lysine 472 participates in a covalent cross-link: Glycyl lysine isopeptide (Lys-Gly) (interchain with G-Cter in SUMO1); alternate. Lysine 472 is covalently cross-linked (Glycyl lysine isopeptide (Lys-Gly) (interchain with G-Cter in SUMO2); alternate). Residues serine 475, serine 477, serine 478, and serine 482 each carry the phosphoserine modification.

It belongs to the intermediate filament family. Heterotetramer of two type I and two type II keratins. Forms a heterodimer with KRT18. Associates with KRT20. Interacts with PNN. When associated with KRT19, interacts with DMD. Interacts with TCHP. Interacts with APEX1. Interacts with GPER1. Interacts with EPPK1. Interacts with PKP1 and PKP2. In terms of processing, O-glycosylated. O-GlcNAcylation at multiple sites increases solubility, and decreases stability by inducing proteasomal degradation. O-glycosylated (O-GlcNAcylated), in a cell cycle-dependent manner. In terms of tissue distribution, expressed in cardiac and striated muscle. Expressed at Z-lines within the muscle fibers and at Z-line and M-line domains at costameres at the sarcolemmal membrane (at protein level). Observed in coagulating gland, bladder, salivary gland, kidney, spleen, thymus, lung and heart. Also observed in ventral prostate, seminal vesicle and liver where expression increases following castration.

The protein localises to the cytoplasm. Its subcellular location is the nucleus. The protein resides in the nucleoplasm. It is found in the nucleus matrix. Together with KRT19, helps to link the contractile apparatus to dystrophin at the costameres of striated muscle. This chain is Keratin, type II cytoskeletal 8 (Krt8), found in Rattus norvegicus (Rat).